Reading from the N-terminus, the 530-residue chain is Lysine--tRNA ligase (530 aa).

Positions 28 to 36 match the 'HIGH' region motif; that stretch reads PSGHIHVGN. Positions 278 to 282 match the 'KMSKS' region motif; it reads PMSSS.

The protein belongs to the class-I aminoacyl-tRNA synthetase family.

It localises to the cytoplasm. It carries out the reaction tRNA(Lys) + L-lysine + ATP = L-lysyl-tRNA(Lys) + AMP + diphosphate. In Methanocaldococcus jannaschii (strain ATCC 43067 / DSM 2661 / JAL-1 / JCM 10045 / NBRC 100440) (Methanococcus jannaschii), this protein is Lysine--tRNA ligase (lysS).